A 306-amino-acid chain; its full sequence is Agmatinase (306 aa).

6 residues coordinate Mn(2+): H126, D149, H151, D153, D230, and D232.

It belongs to the arginase family. Agmatinase subfamily. Mn(2+) is required as a cofactor.

The enzyme catalyses agmatine + H2O = urea + putrescine. The protein operates within amine and polyamine biosynthesis; putrescine biosynthesis via agmatine pathway; putrescine from agmatine: step 1/1. In terms of biological role, catalyzes the formation of putrescine from agmatine. The sequence is that of Agmatinase from Salmonella dublin (strain CT_02021853).